We begin with the raw amino-acid sequence, 365 residues long: Chorismate synthase (365 aa).

2 residues coordinate NADP(+): arginine 48 and arginine 54. FMN contacts are provided by residues 125 to 127 (RSS), 237 to 238 (NA), glycine 277, 292 to 296 (KPTSS), and arginine 318.

The protein belongs to the chorismate synthase family. As to quaternary structure, homotetramer. Requires FMNH2 as cofactor.

It catalyses the reaction 5-O-(1-carboxyvinyl)-3-phosphoshikimate = chorismate + phosphate. The protein operates within metabolic intermediate biosynthesis; chorismate biosynthesis; chorismate from D-erythrose 4-phosphate and phosphoenolpyruvate: step 7/7. Functionally, catalyzes the anti-1,4-elimination of the C-3 phosphate and the C-6 proR hydrogen from 5-enolpyruvylshikimate-3-phosphate (EPSP) to yield chorismate, which is the branch point compound that serves as the starting substrate for the three terminal pathways of aromatic amino acid biosynthesis. This reaction introduces a second double bond into the aromatic ring system. In Polaromonas naphthalenivorans (strain CJ2), this protein is Chorismate synthase.